A 495-amino-acid chain; its full sequence is MADRNLRDLLAPWVQDAPACALREMILDSRVAAAGDLFVAIVGHKADGRRYIPQAIAQGVAAIVAEADGEAADGTVREMHGVPVVYLSSLNQRLSALAGRFYQQPAEKLQLIGVTGTNGKTTTTQLLAQWSQALGEMSAVMGTVGNGLLGRAIPTENTTGSAVDVQQVLSQLVEQGATFAAMEVSSHGLVQNRVAALPFTAAVFTNLSRDHLDYHGDMESYEAAKWLLFAEHRVGQMIINADDEVGLRWLAKLPDAVAVTMENNLVPGCRGRWLKATQIDYHDNGATIAFDSSWGQGEIESRLMGAFNVSNMLLALATLLSLGYPLDKLVIAGSQLQPVCGRMEVFHAEGKPTVVVDYAHTPDALEKALEAARLHCQGKLWCVFGCGGDRDKGKRPLMGGIAEQLADRVVVTDDNPRSEEPQAIVADILSGLLDAGRVQVIHGRAEAVTSAIMQAQENDVVLVAGKGHEDYQLVGNQRLDYSDRITVARLLGVIA.

UDP-N-acetyl-alpha-D-muramoyl-L-alanyl-D-glutamate is bound by residues Leu27, Ser29, and 44–46 (HKA). ATP is bound at residue 116–122 (GTNGKTT). Residues Asn157, 158–159 (TT), Ser185, Gln191, and Arg193 contribute to the UDP-N-acetyl-alpha-D-muramoyl-L-alanyl-D-glutamate site. Lys225 bears the N6-carboxylysine mark. Residues Arg390, 414–417 (DNPR), Gly465, and Glu469 each bind meso-2,6-diaminopimelate. The Meso-diaminopimelate recognition motif signature appears at 414–417 (DNPR).

It belongs to the MurCDEF family. MurE subfamily. Requires Mg(2+) as cofactor. Post-translationally, carboxylation is probably crucial for Mg(2+) binding and, consequently, for the gamma-phosphate positioning of ATP.

The protein localises to the cytoplasm. It catalyses the reaction UDP-N-acetyl-alpha-D-muramoyl-L-alanyl-D-glutamate + meso-2,6-diaminopimelate + ATP = UDP-N-acetyl-alpha-D-muramoyl-L-alanyl-gamma-D-glutamyl-meso-2,6-diaminopimelate + ADP + phosphate + H(+). It functions in the pathway cell wall biogenesis; peptidoglycan biosynthesis. Functionally, catalyzes the addition of meso-diaminopimelic acid to the nucleotide precursor UDP-N-acetylmuramoyl-L-alanyl-D-glutamate (UMAG) in the biosynthesis of bacterial cell-wall peptidoglycan. The chain is UDP-N-acetylmuramoyl-L-alanyl-D-glutamate--2,6-diaminopimelate ligase from Pectobacterium atrosepticum (strain SCRI 1043 / ATCC BAA-672) (Erwinia carotovora subsp. atroseptica).